The chain runs to 255 residues: 1-(5-phosphoribosyl)-5-[(5-phosphoribosylamino)methylideneamino] imidazole-4-carboxamide isomerase (255 aa).

The active-site Proton acceptor is the D8. D129 acts as the Proton donor in catalysis.

The protein belongs to the HisA/HisF family.

It localises to the cytoplasm. The catalysed reaction is 1-(5-phospho-beta-D-ribosyl)-5-[(5-phospho-beta-D-ribosylamino)methylideneamino]imidazole-4-carboxamide = 5-[(5-phospho-1-deoxy-D-ribulos-1-ylimino)methylamino]-1-(5-phospho-beta-D-ribosyl)imidazole-4-carboxamide. The protein operates within amino-acid biosynthesis; L-histidine biosynthesis; L-histidine from 5-phospho-alpha-D-ribose 1-diphosphate: step 4/9. This is 1-(5-phosphoribosyl)-5-[(5-phosphoribosylamino)methylideneamino] imidazole-4-carboxamide isomerase from Prochlorococcus marinus (strain MIT 9313).